A 139-amino-acid polypeptide reads, in one-letter code: Large ribosomal subunit protein uL14 (139 aa).

The protein belongs to the universal ribosomal protein uL14 family.

The sequence is that of Large ribosomal subunit protein uL14 (RPL23) from Syntrichia ruralis (Great hairy screw-moss).